Reading from the N-terminus, the 208-residue chain is Thymidylate kinase (208 aa).

Residue 9–16 (GGEGCGKS) coordinates ATP.

It belongs to the thymidylate kinase family.

The enzyme catalyses dTMP + ATP = dTDP + ADP. Its function is as follows. Phosphorylation of dTMP to form dTDP in both de novo and salvage pathways of dTTP synthesis. In Dehalococcoides mccartyi (strain CBDB1), this protein is Thymidylate kinase.